Here is a 79-residue protein sequence, read N- to C-terminus: Small ribosomal subunit protein uS17 (79 aa).

The protein belongs to the universal ribosomal protein uS17 family. In terms of assembly, part of the 30S ribosomal subunit.

In terms of biological role, one of the primary rRNA binding proteins, it binds specifically to the 5'-end of 16S ribosomal RNA. The chain is Small ribosomal subunit protein uS17 from Bartonella quintana (strain Toulouse) (Rochalimaea quintana).